A 600-amino-acid chain; its full sequence is ATP-dependent lipid A-core flippase (600 aa).

A run of 6 helical transmembrane segments spans residues 28–48 (TLSI…IAFI), 80–100 (VMLM…VANF), 159–179 (ALIS…LMFF), 182–202 (WKLS…ISIV), 267–287 (VSQP…LYAA), and 295–315 (ELTA…LQPI). One can recognise an ABC transmembrane type-1 domain in the interval 29–327 (LSILGLIVYG…LTRVNAEFQR (299 aa)). Residues 359-596 (LRFDNVSFSY…KGAYAGLYQM (238 aa)) enclose the ABC transporter domain. Residue 393–400 (GRSGSGKS) coordinates ATP.

The protein belongs to the ABC transporter superfamily. Lipid exporter (TC 3.A.1.106) family. Homodimer.

The protein localises to the cell inner membrane. The enzyme catalyses ATP + H2O + lipid A-core oligosaccharideSide 1 = ADP + phosphate + lipid A-core oligosaccharideSide 2.. Involved in lipopolysaccharide (LPS) biosynthesis. Translocates lipid A-core from the inner to the outer leaflet of the inner membrane. Transmembrane domains (TMD) form a pore in the inner membrane and the ATP-binding domain (NBD) is responsible for energy generation. The polypeptide is ATP-dependent lipid A-core flippase (Shewanella denitrificans (strain OS217 / ATCC BAA-1090 / DSM 15013)).